Here is a 130-residue protein sequence, read N- to C-terminus: Large ribosomal subunit protein bL17 (130 aa).

This sequence belongs to the bacterial ribosomal protein bL17 family. As to quaternary structure, part of the 50S ribosomal subunit. Contacts protein L32.

This is Large ribosomal subunit protein bL17 from Shewanella pealeana (strain ATCC 700345 / ANG-SQ1).